The following is a 326-amino-acid chain: MDQPTWKRPHRAKFAGVSDAAQQRQMPNLASIDLNLLVDLEALLQYRHITQAAQHVGRSQPAMSRALSRLRGMLKDDLLVAGSRGLVLTPLAECLTQMLPSVLDAIRQMMNLSLAPAQRRWKVTMAMPDHQAVVLLPHLLPRLHERAPHLDIVTDPLLGGALGLLEQGEIDVVVGQMGAAPLGYLRRRLYADSFTCVLRHNHPALAQEWTIEAFAALRHVAIASEPDELFGQIYDRLTKLGLQRGDPMVVSTVLTAAVLIAATDSVLVVPSRVATRVAAMLSLAVIPPPVELRPYEVALIWHERCHRDPEHRWLRGEIAAAASTAG.

Positions 32–89 constitute an HTH lysR-type domain; it reads IDLNLLVDLEALLQYRHITQAAQHVGRSQPAMSRALSRLRGMLKDDLLVAGSRGLVLT. The segment at residues 49–68 is a DNA-binding region (H-T-H motif); it reads ITQAAQHVGRSQPAMSRALS.

Belongs to the LysR transcriptional regulatory family.

Functionally, acts in trans to stimulate nod gene expression via nodD3 and exo gene expression via SyrA. The polypeptide is HTH-type transcriptional regulator SyrM (syrM) (Rhizobium meliloti (strain 1021) (Ensifer meliloti)).